The following is a 473-amino-acid chain: Putative tyrosine recombinase XerC (473 aa).

The Core-binding (CB) domain maps to 4 to 82; the sequence is MTLPELTQEY…HLRTVYRYAM (79 aa). The region spanning 118 to 305 is the Tyr recombinase domain; sequence RNWLRFLVQE…DYDLMREVMN (188 aa). Catalysis depends on residues R156, K183, H256, R259, and H283. The active-site O-(3'-phospho-DNA)-tyrosine intermediate is Y292. The span at 341-352 shows a compositional bias: polar residues; the sequence is SGTELQPATTES. Residues 341–365 are disordered; the sequence is SGTELQPATTESSEAKKADDTASNP.

It belongs to the 'phage' integrase family.

The protein localises to the cytoplasm. Site-specific tyrosine recombinase, which acts by catalyzing the cutting and rejoining of the recombining DNA molecules. This is Putative tyrosine recombinase XerC from Pseudomonas syringae.